Consider the following 339-residue polypeptide: Ketol-acid reductoisomerase (NADP(+)) (339 aa).

The 182-residue stretch at 1 to 182 (MRVYYDRDAD…GGGRSGIIET (182 aa)) folds into the KARI N-terminal Rossmann domain. NADP(+) contacts are provided by residues 24-27 (YGSQ), Arg-48, Ser-51, Ser-53, and 83-86 (DELQ). His-108 is an active-site residue. Residue Gly-134 coordinates NADP(+). Residues 183 to 328 (TFREECETDL…EKLRAMMPWI (146 aa)) enclose the KARI C-terminal knotted domain. Residues Asp-191, Glu-195, Glu-227, and Glu-231 each contribute to the Mg(2+) site. Ser-252 serves as a coordination point for substrate.

Belongs to the ketol-acid reductoisomerase family. Mg(2+) serves as cofactor.

It catalyses the reaction (2R)-2,3-dihydroxy-3-methylbutanoate + NADP(+) = (2S)-2-acetolactate + NADPH + H(+). The enzyme catalyses (2R,3R)-2,3-dihydroxy-3-methylpentanoate + NADP(+) = (S)-2-ethyl-2-hydroxy-3-oxobutanoate + NADPH + H(+). Its pathway is amino-acid biosynthesis; L-isoleucine biosynthesis; L-isoleucine from 2-oxobutanoate: step 2/4. It participates in amino-acid biosynthesis; L-valine biosynthesis; L-valine from pyruvate: step 2/4. Involved in the biosynthesis of branched-chain amino acids (BCAA). Catalyzes an alkyl-migration followed by a ketol-acid reduction of (S)-2-acetolactate (S2AL) to yield (R)-2,3-dihydroxy-isovalerate. In the isomerase reaction, S2AL is rearranged via a Mg-dependent methyl migration to produce 3-hydroxy-3-methyl-2-ketobutyrate (HMKB). In the reductase reaction, this 2-ketoacid undergoes a metal-dependent reduction by NADPH to yield (R)-2,3-dihydroxy-isovalerate. The polypeptide is Ketol-acid reductoisomerase (NADP(+)) (Chelativorans sp. (strain BNC1)).